A 126-amino-acid polypeptide reads, in one-letter code: Protein ApaG (126 aa).

The region spanning 2-126 is the ApaG domain; that stretch reads DVIQPCIKIQ…FRLAIPNVLN (125 aa).

This is Protein ApaG from Vibrio campbellii (strain ATCC BAA-1116).